A 968-amino-acid polypeptide reads, in one-letter code: Putative pectinesterase/pectinesterase inhibitor 26 (968 aa).

A helical transmembrane segment spans residues I33 to I53. Positions L71 to I230 are pectinesterase inhibitor 26 A. N-linked (GlcNAc...) asparagine glycosylation is found at N101, N158, N219, N295, N352, N400, N464, N541, N559, and N603. The interval L265–I430 is pectinesterase inhibitor 26 B. The pectinesterase inhibitor 26 C stretch occupies residues P453–I614. The tract at residues H660–D954 is pectinesterase 26. Residue T735 coordinates substrate. Residue N737 is glycosylated (N-linked (GlcNAc...) asparagine). Position 765 (Q765) interacts with substrate. Catalysis depends on D788, which acts as the Proton donor; for pectinesterase activity. C802 and C822 are joined by a disulfide. Residue D809 is the Nucleophile; for pectinesterase activity of the active site. N863 carries an N-linked (GlcNAc...) asparagine glycan. Substrate-binding residues include R872 and W874. N900 carries an N-linked (GlcNAc...) asparagine glycan.

It in the N-terminal section; belongs to the PMEI family. This sequence in the C-terminal section; belongs to the pectinesterase family. As to expression, expressed in flowers.

The protein resides in the membrane. It catalyses the reaction [(1-&gt;4)-alpha-D-galacturonosyl methyl ester](n) + n H2O = [(1-&gt;4)-alpha-D-galacturonosyl](n) + n methanol + n H(+). It participates in glycan metabolism; pectin degradation; 2-dehydro-3-deoxy-D-gluconate from pectin: step 1/5. Acts in the modification of cell walls via demethylesterification of cell wall pectin. The sequence is that of Putative pectinesterase/pectinesterase inhibitor 26 (PME26) from Arabidopsis thaliana (Mouse-ear cress).